We begin with the raw amino-acid sequence, 117 residues long: Prefoldin subunit beta (117 aa).

The protein belongs to the prefoldin subunit beta family. In terms of assembly, heterohexamer of two alpha and four beta subunits.

It localises to the cytoplasm. In terms of biological role, molecular chaperone capable of stabilizing a range of proteins. Seems to fulfill an ATP-independent, HSP70-like function in archaeal de novo protein folding. The protein is Prefoldin subunit beta of Methanosarcina mazei (strain ATCC BAA-159 / DSM 3647 / Goe1 / Go1 / JCM 11833 / OCM 88) (Methanosarcina frisia).